The sequence spans 201 residues: Small ribosomal subunit protein uS4c (201 aa).

A disordered region spans residues 17–44; it reads ALPGLTNKKPRNGSDLRNQSRSGKKSQY. The S4 RNA-binding domain occupies 89-149; sequence MRLDNILFRL…DEQKSRALIQ (61 aa).

This sequence belongs to the universal ribosomal protein uS4 family. Part of the 30S ribosomal subunit. Contacts protein S5. The interaction surface between S4 and S5 is involved in control of translational fidelity.

It is found in the plastid. Its subcellular location is the chloroplast. One of the primary rRNA binding proteins, it binds directly to 16S rRNA where it nucleates assembly of the body of the 30S subunit. In terms of biological role, with S5 and S12 plays an important role in translational accuracy. This Nicotiana sylvestris (Wood tobacco) protein is Small ribosomal subunit protein uS4c (rps4).